Reading from the N-terminus, the 319-residue chain is HTH-type transcriptional regulator YidZ (319 aa).

The HTH lysR-type domain occupies Leu8–Thr65. Positions Val25 to Ser44 form a DNA-binding region, H-T-H motif.

Belongs to the LysR transcriptional regulatory family.

Functionally, involved in anaerobic NO protection. The protein is HTH-type transcriptional regulator YidZ of Citrobacter koseri (strain ATCC BAA-895 / CDC 4225-83 / SGSC4696).